Reading from the N-terminus, the 209-residue chain is Uracil phosphoribosyltransferase (209 aa).

5-phospho-alpha-D-ribose 1-diphosphate contacts are provided by residues arginine 79, arginine 104, and 131–139; that span reads DPMLATGNS. Uracil is bound by residues isoleucine 194 and 199 to 201; that span reads GDA. Residue aspartate 200 participates in 5-phospho-alpha-D-ribose 1-diphosphate binding.

This sequence belongs to the UPRTase family. Mg(2+) is required as a cofactor.

The enzyme catalyses UMP + diphosphate = 5-phospho-alpha-D-ribose 1-diphosphate + uracil. The protein operates within pyrimidine metabolism; UMP biosynthesis via salvage pathway; UMP from uracil: step 1/1. Allosterically activated by GTP. Functionally, catalyzes the conversion of uracil and 5-phospho-alpha-D-ribose 1-diphosphate (PRPP) to UMP and diphosphate. The polypeptide is Uracil phosphoribosyltransferase (Rhizobium meliloti (strain 1021) (Ensifer meliloti)).